The primary structure comprises 522 residues: Peptide methionine sulfoxide reductase MsrA/MsrB (522 aa).

Residues 17-174 (LALGACSPKI…ALALIRDPNA (158 aa)) form the Thioredoxin domain. A disulfide bridge links C68 with C71. The tract at residues 199 to 354 (RTIYLAGGCF…PNGYCHIDIR (156 aa)) is peptide methionine sulfoxide reductase A. C207 is an active-site residue. One can recognise a MsrB domain in the interval 383–506 (DAELKRTLTE…NGASLKFIPL (124 aa)). A disulfide bond links C440 and C495. Catalysis depends on C495, which acts as the Nucleophile.

The protein in the N-terminal section; belongs to the thioredoxin family. It in the central section; belongs to the MsrA Met sulfoxide reductase family. This sequence in the C-terminal section; belongs to the MsrB Met sulfoxide reductase family.

The catalysed reaction is L-methionyl-[protein] + [thioredoxin]-disulfide + H2O = L-methionyl-(S)-S-oxide-[protein] + [thioredoxin]-dithiol. It carries out the reaction [thioredoxin]-disulfide + L-methionine + H2O = L-methionine (S)-S-oxide + [thioredoxin]-dithiol. The enzyme catalyses L-methionyl-[protein] + [thioredoxin]-disulfide + H2O = L-methionyl-(R)-S-oxide-[protein] + [thioredoxin]-dithiol. Functionally, has an important function as a repair enzyme for proteins that have been inactivated by oxidation. Catalyzes the reversible oxidation-reduction of methionine sulfoxide in proteins to methionine. The protein is Peptide methionine sulfoxide reductase MsrA/MsrB (msrAB) of Neisseria meningitidis serogroup A / serotype 4A (strain DSM 15465 / Z2491).